Reading from the N-terminus, the 69-residue chain is Amphipathic peptide Hp1404 (69 aa).

An N-terminal signal peptide occupies residues 1-23; that stretch reads MKTQFAILMITVVLMQMLVQTEG. A Phenylalanine amide modification is found at Phe37. The propeptide occupies 41-69; the sequence is GLKNLDQLDDSFDSDLSDADVKLLREMFK.

Belongs to the non-disulfide-bridged peptide (NDBP) superfamily. Short antimicrobial peptide (group 4) family. As to expression, expressed by the venom gland.

Its subcellular location is the secreted. The protein resides in the target cell membrane. Its activity is regulated as follows. Antibacterial activity is decreased by serum. In terms of biological role, antimicrobial peptide that acts by inducing concentration-dependent membrane disruption, implying a membrane-lytic mode of action. Acts with potent activity against Gram-positive bacteria (MIC=4.04-16.16 uM) including methicillin-resistant S.aureus (MRSA). Its activity on Gram-negative bacteria is controversial. Li and colleagues (2014) describe no activity towards E.coli and P.aeruginosa, while Kim and colleagues (2018) describe a potent activity towards P.aeruginosa (MIC=3.13-12.5 uM), and Luo and colleagues (2021) describe a potent activity against antibiotic-sensitive and -resistant Acinetobacter baumannii strains (MIC=3.2-10 uM). On S.aureus, possibly acts by impairing an unknown intracellular target and/or by interacting with the membrane, leading to the lateral expansion of the membrane area at high MIC concentrations, resulting in the formation of mesosome-like structures that leads to cell lysis. Shows moderate inhibition of P.aeruginosa biofilm formation. Administration of this peptide at sub-MIC concentrations in multiple treatments does not lead to resistance in S.aureus. Exhibits low toxicity and hemolytic activity against mammalian cell lines and BALB/c mice. In vivo, improves the survival rate of the MRSA infected BALB/c mice in the peritonitis model. The protein is Amphipathic peptide Hp1404 of Heterometrus petersii (Asian forest scorpion).